The primary structure comprises 289 residues: Diaminopimelate epimerase (289 aa).

Positions 11 and 78 each coordinate substrate. C87 functions as the Proton donor in the catalytic mechanism. Substrate contacts are provided by residues 88-89, N163, N199, and 217-218; these read GN and ER. The active-site Proton acceptor is C226. Position 227–228 (227–228) interacts with substrate; sequence GT.

It belongs to the diaminopimelate epimerase family. Homodimer.

It localises to the cytoplasm. It catalyses the reaction (2S,6S)-2,6-diaminopimelate = meso-2,6-diaminopimelate. It functions in the pathway amino-acid biosynthesis; L-lysine biosynthesis via DAP pathway; DL-2,6-diaminopimelate from LL-2,6-diaminopimelate: step 1/1. Its function is as follows. Catalyzes the stereoinversion of LL-2,6-diaminopimelate (L,L-DAP) to meso-diaminopimelate (meso-DAP), a precursor of L-lysine and an essential component of the bacterial peptidoglycan. In Mycolicibacterium vanbaalenii (strain DSM 7251 / JCM 13017 / BCRC 16820 / KCTC 9966 / NRRL B-24157 / PYR-1) (Mycobacterium vanbaalenii), this protein is Diaminopimelate epimerase.